Reading from the N-terminus, the 99-residue chain is Putative regulatory protein Kole_1849 (99 aa).

Belongs to the RemA family.

This Kosmotoga olearia (strain ATCC BAA-1733 / DSM 21960 / TBF 19.5.1) protein is Putative regulatory protein Kole_1849.